We begin with the raw amino-acid sequence, 302 residues long: Protein NEOXANTHIN-DEFICIENT 1 (302 aa).

Its function is as follows. Required for neoxanthin biosynthesis. Probably not involved directly in the enzymatic conversion of violaxanthin to neoxanthin. Is necessary but not sufficient for neoxanthin synthesis. The protein is Protein NEOXANTHIN-DEFICIENT 1 of Oryza sativa subsp. japonica (Rice).